The sequence spans 205 residues: Glycerol-3-phosphate acyltransferase (205 aa).

6 helical membrane-spanning segments follow: residues 5 to 25, 56 to 76, 84 to 104, 114 to 134, 144 to 164, and 165 to 185; these read LIAT…YIIA, ICVL…AIAL, VPAL…YFGF, IGVV…VAIL, LGSL…LPFF, and HYPL…LWRH.

It belongs to the PlsY family. In terms of assembly, probably interacts with PlsX.

It is found in the cell membrane. The enzyme catalyses an acyl phosphate + sn-glycerol 3-phosphate = a 1-acyl-sn-glycero-3-phosphate + phosphate. Its pathway is lipid metabolism; phospholipid metabolism. Functionally, catalyzes the transfer of an acyl group from acyl-phosphate (acyl-PO(4)) to glycerol-3-phosphate (G3P) to form lysophosphatidic acid (LPA). This enzyme utilizes acyl-phosphate as fatty acyl donor, but not acyl-CoA or acyl-ACP. This chain is Glycerol-3-phosphate acyltransferase, found in Shouchella clausii (strain KSM-K16) (Alkalihalobacillus clausii).